A 351-amino-acid chain; its full sequence is Photosystem II D2 protein (351 aa).

Residues 39-59 form a helical membrane-spanning segment; it reads TAYLAIGGWLTGTTFVTSWYT. A chlorophyll a-binding site is contributed by H116. A helical membrane pass occupies residues 123-139; the sequence is GFMLRQFEIARLVGIRP. Pheophytin a is bound by residues Q128 and N141. A helical transmembrane segment spans residues 151 to 164; that stretch reads VFVSVFLMYPLGQS. Position 196 (H196) interacts with chlorophyll a. Residues 206–226 traverse the membrane as a helical segment; it reads GALLCAIHGATVENTLFEDGE. H213 and F260 together coordinate a plastoquinone. H213 serves as a coordination point for Fe cation. H267 contributes to the Fe cation binding site. A helical transmembrane segment spans residues 277 to 293; that stretch reads GLWTSSIGIIGLALNLR.

This sequence belongs to the reaction center PufL/M/PsbA/D family. In terms of assembly, PSII is composed of 1 copy each of membrane proteins PsbA, PsbB, PsbC, PsbD, PsbE, PsbF, PsbH, PsbI, PsbJ, PsbK, PsbL, PsbM, PsbT, PsbX, PsbY, PsbZ, Psb30/Ycf12, peripheral proteins PsbO, CyanoQ (PsbQ), PsbU, PsbV and a large number of cofactors. It forms dimeric complexes. It depends on The D1/D2 heterodimer binds P680, chlorophylls that are the primary electron donor of PSII, and subsequent electron acceptors. It shares a non-heme iron and each subunit binds pheophytin, quinone, additional chlorophylls, carotenoids and lipids. There is also a Cl(-1) ion associated with D1 and D2, which is required for oxygen evolution. The PSII complex binds additional chlorophylls, carotenoids and specific lipids. as a cofactor.

The protein localises to the cellular thylakoid membrane. The enzyme catalyses 2 a plastoquinone + 4 hnu + 2 H2O = 2 a plastoquinol + O2. Functionally, photosystem II (PSII) is a light-driven water:plastoquinone oxidoreductase that uses light energy to abstract electrons from H(2)O, generating O(2) and a proton gradient subsequently used for ATP formation. It consists of a core antenna complex that captures photons, and an electron transfer chain that converts photonic excitation into a charge separation. The D1/D2 (PsbA/PsbD) reaction center heterodimer binds P680, the primary electron donor of PSII as well as several subsequent electron acceptors. D2 is needed for assembly of a stable PSII complex. This chain is Photosystem II D2 protein, found in Synechococcus sp. (strain WH7803).